A 464-amino-acid polypeptide reads, in one-letter code: GTPase Der (464 aa).

2 EngA-type G domains span residues 3-166 (ALVA…PVLE) and 177-350 (LQFA…QSAN). Residues 9–16 (GRPNVGKS), 56–60 (DTGGV), 118–121 (NKAE), 183–190 (GRPNVGKS), 230–234 (DTAGI), and 295–298 (NKWD) each bind GTP. Residues 351–435 (SHLPTGELNR…PIALEFRTVK (85 aa)) enclose the KH-like domain.

It belongs to the TRAFAC class TrmE-Era-EngA-EngB-Septin-like GTPase superfamily. EngA (Der) GTPase family. In terms of assembly, associates with the 50S ribosomal subunit.

In terms of biological role, GTPase that plays an essential role in the late steps of ribosome biogenesis. The chain is GTPase Der from Nitrosococcus oceani (strain ATCC 19707 / BCRC 17464 / JCM 30415 / NCIMB 11848 / C-107).